The following is a 225-amino-acid chain: Uracil-DNA glycosylase (225 aa).

The active-site Proton acceptor is Asp-65.

This sequence belongs to the uracil-DNA glycosylase (UDG) superfamily. UNG family.

Its subcellular location is the cytoplasm. It carries out the reaction Hydrolyzes single-stranded DNA or mismatched double-stranded DNA and polynucleotides, releasing free uracil.. Excises uracil residues from the DNA which can arise as a result of misincorporation of dUMP residues by DNA polymerase or due to deamination of cytosine. This Anoxybacillus flavithermus (strain DSM 21510 / WK1) protein is Uracil-DNA glycosylase.